A 307-amino-acid polypeptide reads, in one-letter code: Small ribosomal subunit protein uS5m (307 aa).

The transit peptide at 1–13 (MFKRQLSTSVRYL) directs the protein to the mitochondrion. The S5 DRBM domain maps to 144 to 208 (LTMKPLVMKR…WDAVRNLKEI (65 aa)).

Belongs to the universal ribosomal protein uS5 family. As to quaternary structure, component of the mitochondrial small ribosomal subunit (mt-SSU). Mature yeast 74S mitochondrial ribosomes consist of a small (37S) and a large (54S) subunit. The 37S small subunit contains a 15S ribosomal RNA (15S mt-rRNA) and 34 different proteins. The 54S large subunit contains a 21S rRNA (21S mt-rRNA) and 46 different proteins. uS3m, uS4m and uS5m form the narrow entry site of the mRNA channel.

The protein localises to the mitochondrion. Functionally, component of the mitochondrial ribosome (mitoribosome), a dedicated translation machinery responsible for the synthesis of mitochondrial genome-encoded proteins, including at least some of the essential transmembrane subunits of the mitochondrial respiratory chain. The mitoribosomes are attached to the mitochondrial inner membrane and translation products are cotranslationally integrated into the membrane. The sequence is that of Small ribosomal subunit protein uS5m (MRPS5) from Saccharomyces cerevisiae (strain ATCC 204508 / S288c) (Baker's yeast).